Consider the following 234-residue polypeptide: MTTSDLPAFWTVIPAAGVGSRMRADRPKQYLDLAGRTVIERTLDCFLEHPMLRGLVVCLAEDDPYWPGLDCAASRHVQRAAGGAERAGSVLNGLLRLLELGAQADDWVLVHDAARPNLTRGDLDRLLEELAEDPVGGLLAVPARDTLKRSDRDGRVSETIDRSVVWLAYTPQMFRLGALHRALADALVAGVAITDEASAMEWAGYAPKLVEGRADNLKITTPEDLLRLQRSFPH.

The protein belongs to the IspD/TarI cytidylyltransferase family. IspD subfamily.

It carries out the reaction 2-C-methyl-D-erythritol 4-phosphate + CTP + H(+) = 4-CDP-2-C-methyl-D-erythritol + diphosphate. Its pathway is isoprenoid biosynthesis; isopentenyl diphosphate biosynthesis via DXP pathway; isopentenyl diphosphate from 1-deoxy-D-xylulose 5-phosphate: step 2/6. Functionally, catalyzes the formation of 4-diphosphocytidyl-2-C-methyl-D-erythritol from CTP and 2-C-methyl-D-erythritol 4-phosphate (MEP). The sequence is that of 2-C-methyl-D-erythritol 4-phosphate cytidylyltransferase from Pseudomonas aeruginosa (strain ATCC 15692 / DSM 22644 / CIP 104116 / JCM 14847 / LMG 12228 / 1C / PRS 101 / PAO1).